The chain runs to 375 residues: Major DNA-binding protein (375 aa).

This sequence belongs to the herpesviridae DNA-binding protein family.

The protein localises to the host nucleus. Its function is as follows. Single-stranded DNA-binding protein required for DNA replication. The protein is Major DNA-binding protein of Equine herpesvirus 1 (strain HVS25A) (EHV-1).